Reading from the N-terminus, the 249-residue chain is MAPSRKFFVGGNWKMNGRKKCLGELICTLNAAKLPADTEVVCAPPSAYIDFARQKLDPKIAVAAQNCYKVTNGAFTGEISPGMIKDLGAEWVVLGHSERRHVFGESDELIGQKVAHALAEGLGVIACIGEKLDEREAGITEKVVFEQTKVIADNVKDWSKVVLAYEPVWAIGTGKTATPQQAQEVHEKLRGWLKCNVSDEVAQSTRIIYGGSVTGATCKELASQPDVDGFLVGGASLKPEFVDIINAKQ.

Asparagine 12 and lysine 14 together coordinate substrate. Lysine 14 is modified (N6-acetyllysine). 3'-nitrotyrosine is present on tyrosine 68. Phosphoserine is present on residues serine 80 and serine 106. A Glycyl lysine isopeptide (Lys-Gly) (interchain with G-Cter in SUMO1) cross-link involves residue lysine 142. Lysine 149 carries the post-translational modification N6-succinyllysine. Lysine 156 carries the N6-acetyllysine; alternate modification. Lysine 156 carries the post-translational modification N6-succinyllysine; alternate. The residue at position 159 (serine 159) is a Phosphoserine. The active-site Proton acceptor is glutamate 166. Threonine 173 bears the Phosphothreonine mark. Residue lysine 194 is modified to N6-acetyllysine; alternate. Lysine 194 bears the N6-succinyllysine; alternate mark. Lysine 194 bears the N6-methyllysine; alternate mark. Serine 198 is subject to Phosphoserine. Tyrosine 209 is modified (3'-nitrotyrosine). Phosphoserine is present on serine 212. Position 214 is a phosphothreonine (threonine 214). Position 223 is a phosphoserine (serine 223). Lysine 238 is modified (N6-acetyllysine).

The protein belongs to the triosephosphate isomerase family. In terms of assembly, homodimer.

It is found in the cytoplasm. The catalysed reaction is D-glyceraldehyde 3-phosphate = dihydroxyacetone phosphate. It carries out the reaction dihydroxyacetone phosphate = methylglyoxal + phosphate. Its pathway is carbohydrate biosynthesis; gluconeogenesis. The protein operates within carbohydrate degradation; glycolysis; D-glyceraldehyde 3-phosphate from glycerone phosphate: step 1/1. In terms of biological role, triosephosphate isomerase is an extremely efficient metabolic enzyme that catalyzes the interconversion between dihydroxyacetone phosphate (DHAP) and D-glyceraldehyde-3-phosphate (G3P) in glycolysis and gluconeogenesis. Functionally, it is also responsible for the non-negligible production of methylglyoxal a reactive cytotoxic side-product that modifies and can alter proteins, DNA and lipids. This Mesocricetus auratus (Golden hamster) protein is Triosephosphate isomerase.